The following is a 334-amino-acid chain: Porphobilinogen deaminase (334 aa).

Position 255 is an S-(dipyrrolylmethanemethyl)cysteine (Cys-255).

The protein belongs to the HMBS family. As to quaternary structure, monomer. Requires dipyrromethane as cofactor.

The catalysed reaction is 4 porphobilinogen + H2O = hydroxymethylbilane + 4 NH4(+). The protein operates within porphyrin-containing compound metabolism; protoporphyrin-IX biosynthesis; coproporphyrinogen-III from 5-aminolevulinate: step 2/4. Tetrapolymerization of the monopyrrole PBG into the hydroxymethylbilane pre-uroporphyrinogen in several discrete steps. The chain is Porphobilinogen deaminase from Burkholderia orbicola (strain MC0-3).